The chain runs to 131 residues: Riboflavin kinase (131 aa).

11–16 (GLQKAG) serves as a coordination point for CDP. Residues T40 and N42 each contribute to the Mg(2+) site. FMN-binding residues include T98 and E106. 111-114 (EKLR) is a CDP binding site.

It belongs to the archaeal riboflavin kinase family. Mg(2+) is required as a cofactor.

It carries out the reaction riboflavin + CTP = CDP + FMN + H(+). It functions in the pathway cofactor biosynthesis; FMN biosynthesis; FMN from riboflavin (CTP route): step 1/1. Its function is as follows. Catalyzes the CTP-dependent phosphorylation of riboflavin (vitamin B2) to form flavin mononucleotide (FMN). This is Riboflavin kinase from Methanosphaera stadtmanae (strain ATCC 43021 / DSM 3091 / JCM 11832 / MCB-3).